We begin with the raw amino-acid sequence, 335 residues long: DNA-directed RNA polymerase subunit alpha (335 aa).

The segment at M1–E233 is alpha N-terminal domain (alpha-NTD). The tract at residues I247–R335 is alpha C-terminal domain (alpha-CTD).

Belongs to the RNA polymerase alpha chain family. Homodimer. The RNAP catalytic core consists of 2 alpha, 1 beta, 1 beta' and 1 omega subunit. When a sigma factor is associated with the core the holoenzyme is formed, which can initiate transcription.

It carries out the reaction RNA(n) + a ribonucleoside 5'-triphosphate = RNA(n+1) + diphosphate. Its function is as follows. DNA-dependent RNA polymerase catalyzes the transcription of DNA into RNA using the four ribonucleoside triphosphates as substrates. The protein is DNA-directed RNA polymerase subunit alpha of Alcanivorax borkumensis (strain ATCC 700651 / DSM 11573 / NCIMB 13689 / SK2).